We begin with the raw amino-acid sequence, 371 residues long: Transaldolase (371 aa).

The active-site Schiff-base intermediate with substrate is Lys140.

The protein belongs to the transaldolase family. Type 2 subfamily.

It localises to the cytoplasm. It carries out the reaction D-sedoheptulose 7-phosphate + D-glyceraldehyde 3-phosphate = D-erythrose 4-phosphate + beta-D-fructose 6-phosphate. It participates in carbohydrate degradation; pentose phosphate pathway; D-glyceraldehyde 3-phosphate and beta-D-fructose 6-phosphate from D-ribose 5-phosphate and D-xylulose 5-phosphate (non-oxidative stage): step 2/3. In terms of biological role, transaldolase is important for the balance of metabolites in the pentose-phosphate pathway. The protein is Transaldolase of Arthrobacter sp. (strain FB24).